The sequence spans 217 residues: uncharacterized protein (217 aa).

7 helical membrane passes run 4-23, 44-66, 76-98, 111-128, 132-154, 166-188, and 198-215; these read IYGI…GKET, NVVI…LTWV, TVET…SIII, FLYL…IHAI, MAMV…PLAL, AGTA…IVLF, and LLLS…ALQL.

The protein resides in the cell membrane. This is an uncharacterized protein from Archaeoglobus fulgidus (strain ATCC 49558 / DSM 4304 / JCM 9628 / NBRC 100126 / VC-16).